A 320-amino-acid chain; its full sequence is Lactamase-like protein GME11357 (320 aa).

Residues His106, His108, Asp110, and His111 each contribute to the Zn(2+) site. Catalysis depends on Asp110, which acts as the Proton donor/acceptor.

Belongs to the metallo-beta-lactamase superfamily. Zn(2+) is required as a cofactor.

It functions in the pathway secondary metabolite biosynthesis. Functionally, lactamase-like protein; part of the gene cluster that mediates the biosynthesis of dibenzodioxocinones such as pestalotiollide B, a novel class of inhibitors against cholesterol ester transfer protein (CEPT). The biosynthesis initiates from condensation of acetate and malonate units catalyzed by the non-reducing PKS pks8/GME11356. Pks8/GME11356 lacks a thioesterase (TE) domain, which is important to the cyclizing of the third ring of atrochrysone carboxylic acid, and the esterase GME11355 might play the role of TE and catalyzes the cyclization reaction of the C ring. The lactamase-like protein GME11357 (or other beta-lactamases in Pestalotiopsis microspora) probably hydrolyzes the thioester bond between the ACP of pks8/GME11356 and the intermediate to release atrochrysone carboxylic acid, which is spontaneously dehydrates to form endocrocin anthrone. Endocrocin anthrone is further converted to emodin via the endocrocin intermediate. Emodin is then oxidized by several enzymes such as the Baeyer-Villiger oxidase GME11358, the oxidoreductase GME11367, the short chain dehydrogenase/reductase GME11373, as well as by other oxidoreductases from the cluster, to modify the A and C rings and open the B ring, and finally yield monodictyphenone. The prenyltransferase GME11375 may catalyze the addition reaction between the C5 side chains and the carbon bone of dibenzodioxocinones. The remaining biochemical reactions to the final product dibenzodioxocinones should be methylation catalyzed by methyltransferase GME11366 and reduction and lactonization reaction catalyzed by a series of oxidordeuctases. The polypeptide is Lactamase-like protein GME11357 (Pestalotiopsis microspora).